The sequence spans 262 residues: UPF0758 protein R01728 (262 aa).

The disordered stretch occupies residues 23–44 (PEKRTRNSPATAPAPATDTHYH). Positions 31–40 (PATAPAPATD) are enriched in low complexity. Residues 140–262 (VLSSWSAVID…HVSLKGLRLF (123 aa)) enclose the MPN domain. Residues histidine 211, histidine 213, and aspartate 224 each coordinate Zn(2+). A JAMM motif motif is present at residues 211-224 (HNHPSGDPTPSRAD).

Belongs to the UPF0758 family.

The protein is UPF0758 protein R01728 of Rhizobium meliloti (strain 1021) (Ensifer meliloti).